Here is a 712-residue protein sequence, read N- to C-terminus: Ribosomal RNA large subunit methyltransferase K/L (712 aa).

The 112-residue stretch at 43 to 154 (TAYRCCLWTR…GEKGVLGLDM (112 aa)) folds into the THUMP domain.

It belongs to the methyltransferase superfamily. RlmKL family.

The protein resides in the cytoplasm. It carries out the reaction guanosine(2445) in 23S rRNA + S-adenosyl-L-methionine = N(2)-methylguanosine(2445) in 23S rRNA + S-adenosyl-L-homocysteine + H(+). It catalyses the reaction guanosine(2069) in 23S rRNA + S-adenosyl-L-methionine = N(2)-methylguanosine(2069) in 23S rRNA + S-adenosyl-L-homocysteine + H(+). Specifically methylates the guanine in position 2445 (m2G2445) and the guanine in position 2069 (m7G2069) of 23S rRNA. In Photobacterium profundum (strain SS9), this protein is Ribosomal RNA large subunit methyltransferase K/L.